The sequence spans 30 residues: Snaclec coagulation factor IX/factor X-binding protein subunit A (30 aa).

Residues 1–30 (DCPSDWSPYEGHCYKHFIKWMNNEDAERFC) form the C-type lectin domain. An intrachain disulfide couples cysteine 2 to cysteine 13.

It belongs to the snaclec family. In terms of assembly, heterodimer of subunits A and B; disulfide-linked. In terms of tissue distribution, expressed by the venom gland.

It localises to the secreted. In terms of biological role, anticoagulant protein which binds to the gamma-carboxyglutamic acid-domain regions of factors IX (F9) and factor X (F10) in the presence of calcium with a 1 to 1 stoichiometry. In Bothrops jararaca (Jararaca), this protein is Snaclec coagulation factor IX/factor X-binding protein subunit A.